A 219-amino-acid chain; its full sequence is Small ribosomal subunit protein uS3c (219 aa).

In terms of domain architecture, KH type-2 spans 43–118; that stretch reads IKNYVQKNMK…KLNIAITRIA (76 aa).

Belongs to the universal ribosomal protein uS3 family. In terms of assembly, part of the 30S ribosomal subunit.

It localises to the plastid. Its subcellular location is the chloroplast. The chain is Small ribosomal subunit protein uS3c (rps3) from Panax ginseng (Korean ginseng).